A 388-amino-acid chain; its full sequence is Probable pectin lyase F-1 (388 aa).

A signal peptide spans Met1 to Ala19. An intrachain disulfide couples Cys80 to Cys103. The N-linked (GlcNAc...) asparagine glycan is linked to Asn126. The active site involves Arg253. The cysteines at positions 328 and 336 are disulfide-linked.

This sequence belongs to the polysaccharide lyase 1 family.

The protein resides in the secreted. The enzyme catalyses Eliminative cleavage of (1-&gt;4)-alpha-D-galacturonan methyl ester to give oligosaccharides with 4-deoxy-6-O-methyl-alpha-D-galact-4-enuronosyl groups at their non-reducing ends.. Functionally, pectinolytic enzymes consist of four classes of enzymes: pectin lyase, polygalacturonase, pectin methylesterase and rhamnogalacturonase. Among pectinolytic enzymes, pectin lyase is the most important in depolymerization of pectin, since it cleaves internal glycosidic bonds of highly methylated pectins. This chain is Probable pectin lyase F-1 (pelF-1), found in Aspergillus terreus (strain NIH 2624 / FGSC A1156).